The chain runs to 588 residues: Aspartate--tRNA ligase (588 aa).

Glu-174 provides a ligand contact to L-aspartate. The interval 198 to 201 is aspartate; the sequence is QLFK. Arg-220 serves as a coordination point for L-aspartate. ATP contacts are provided by residues 220–222 and Gln-229; that span reads RDE. L-aspartate is bound at residue His-448. Glu-482 is an ATP binding site. Arg-489 contacts L-aspartate. Residue 534–537 participates in ATP binding; that stretch reads GIDR.

The protein belongs to the class-II aminoacyl-tRNA synthetase family. Type 1 subfamily. Homodimer.

The protein resides in the cytoplasm. The enzyme catalyses tRNA(Asp) + L-aspartate + ATP = L-aspartyl-tRNA(Asp) + AMP + diphosphate. Functionally, catalyzes the attachment of L-aspartate to tRNA(Asp) in a two-step reaction: L-aspartate is first activated by ATP to form Asp-AMP and then transferred to the acceptor end of tRNA(Asp). The sequence is that of Aspartate--tRNA ligase from Xanthomonas euvesicatoria pv. vesicatoria (strain 85-10) (Xanthomonas campestris pv. vesicatoria).